A 397-amino-acid chain; its full sequence is UPF0761 membrane protein Kkor_1635 (397 aa).

6 helical membrane-spanning segments follow: residues 36–56 (MLALVPLMTVAVSLMAVFPSF), 92–112 (NLSAIGLGFLIVTSLLLMRSI), 132–152 (ILAYWAMLTMAPILIAASLAA), 168–188 (ILTFGLPFILIVLAFSALYMV), 201–221 (IAAVITAILFEAAKYGFAIFV), and 237–257 (IPIFFLWVYLSWSILLLGVIV).

The protein belongs to the UPF0761 family.

Its subcellular location is the cell inner membrane. The sequence is that of UPF0761 membrane protein Kkor_1635 from Kangiella koreensis (strain DSM 16069 / JCM 12317 / KCTC 12182 / SW-125).